The primary structure comprises 489 residues: Aklavinone 12-hydroxylase DnrF (489 aa).

Residues 17–18 (LG), E37, Q121, and L145 contribute to the FAD site. Y224 (proton acceptor) is an active-site residue. Position 308 (D308) interacts with FAD. Residue G317 coordinates aklavinone. The tract at residues 402 to 428 (VAAEDDDPEPTEDPRRPSGRPGFRAPH) is disordered.

This sequence belongs to the PheA/TfdB FAD monooxygenase family. As to quaternary structure, monomer. The cofactor is FAD.

The enzyme catalyses aklavinone + NADPH + O2 + H(+) = epsilon-rhodomycinone + NADP(+) + H2O. The protein operates within antibiotic biosynthesis; daunorubicin biosynthesis. It participates in antibiotic biosynthesis; carminomycin biosynthesis. Its pathway is antibiotic biosynthesis; rhodomycin biosynthesis. It functions in the pathway antibiotic biosynthesis; doxorubicin biosynthesis. In terms of biological role, involved in the biosynthesis of the anthracyclines carminomycin, rhodomycin, daunorubicin (daunomycin) and doxorubicin (adriamycin) which are aromatic polyketide antibiotics that exhibit high cytotoxicity and are widely applied in the chemotherapy of a variety of cancers. Catalyzes the incorporation of a hydroxyl group at position C-11 of aklavinone, resulting in epsilon-rhodomycinone. The polypeptide is Aklavinone 12-hydroxylase DnrF (dnrF) (Streptomyces peucetius subsp. caesius).